We begin with the raw amino-acid sequence, 372 residues long: Cyclin-dependent kinase 9 (372 aa).

The 297-residue stretch at 19-315 folds into the Protein kinase domain; sequence YEKLAKIGQG…SDDALNHDFF (297 aa). 25–33 is a binding site for ATP; the sequence is IGQGTFGEV. N6-acetyllysine; by EP300/CBP, PCAF/KAT2B and GCN5/KAT2A is present on Lys-44. Residues Lys-48 and 104 to 106 contribute to the ATP site; that span reads DFC. Position 48 is an N6-acetyllysine; by PCAF/KAT2B and GCN5/KAT2A (Lys-48). The active-site Proton acceptor is Asp-149. Residues 166–191 form a T-loop region; the sequence is ADFGLARAFSLAKNSQPNRYTNRVVT. Position 167 (Asp-167) interacts with ATP. Position 175 is a phosphoserine (Ser-175). Thr-186 is modified (phosphothreonine; by CaMK1D). The interval 343-372 is disordered; it reads RRKGSQITQQSTNQSRNPATTNQTEFERVF. A Phosphoserine; by CDK9 and PKA modification is found at Ser-347. The span at 347–366 shows a compositional bias: polar residues; it reads SQITQQSTNQSRNPATTNQT. Residue Thr-350 is modified to Phosphothreonine; by CDK9. Ser-353 carries the post-translational modification Phosphoserine; by CDK9. Residue Thr-354 is modified to Phosphothreonine; by CDK9. Residue Ser-357 is modified to Phosphoserine; by CDK9. Phosphothreonine; by CDK9 occurs at positions 362 and 363.

Belongs to the protein kinase superfamily. CMGC Ser/Thr protein kinase family. CDC2/CDKX subfamily. As to quaternary structure, component of the super elongation complex (SEC), at least composed of EAF1, EAF2, CDK9, MLLT3/AF9, AFF (AFF1 or AFF4), the P-TEFb complex and ELL (ELL, ELL2 or ELL3). Associates with CCNT1/cyclin-T1, CCNT2/cyclin-T2 (isoform A and isoform B) or CCNK/cyclin-K to form active P-TEFb. P-TEFb forms a complex with AFF4/AF5Q31 and is part of the super elongation complex (SEC). Component of a complex which is composed of at least 5 members: HTATSF1/Tat-SF1, P-TEFb complex, RNA pol II, SUPT5H, and NCL/nucleolin. Associates with UBR5 and forms a transcription regulatory complex composed of CDK9, RNAP II, UBR5 and TFIIS/TCEA1 that can stimulate target gene transcription (e.g. gamma fibrinogen/FGG) by recruiting their promoters. Component of the 7SK snRNP inactive complex which is composed of at least 8 members: P-TEFb (composed of CDK9 and CCNT1/cyclin-T1), HEXIM1, HEXIM2, LARP7, BCDIN3, SART3 proteins and 7SK and U6 snRNAs. This inactive 7SK snRNP complex can also interact with NCOR1 and HDAC3, probably to regulate CDK9 acetylation. Release of P-TEFb from P-TEFb/7SK snRNP complex requires both PP2B to transduce calcium Ca(2+) signaling in response to stimuli (e.g. UV or hexamethylene bisacetamide (HMBA)), and PPP1CA to dephosphorylate Thr-186. This released P-TEFb remains inactive in the pre-initiation complex with BRD4 until new Thr-186 phosphorylation occurs after the synthesis of a short RNA. Interacts with BRD4; to target chromatin binding. Interacts with JMJD6. Interacts with activated nuclear STAT3 and RELA/p65. Binds to AR and MYOD1. Forms a complex composed of CDK9, CCNT1/cyclin-T1, EP300 and GATA4 that stimulates hypertrophy in cardiomyocytes. The large PER complex involved in the repression of transcriptional termination is composed of at least PER2, CDK9, DDX5, DHX9, NCBP1 and POLR2A. Interacts with HSF1. Interacts with TBX21. Interacts with WDR43. Interacts with ZMYND8; the association appears to occur between homodimeric ZMYND8 and the activated form of the P-TEFb complex. Autophosphorylation at Thr-186, Ser-347, Thr-350, Ser-353, Thr-354 and Ser-357 triggers kinase activity by promoting cyclin and substrate binding upon conformational changes. Thr-186 phosphorylation requires the calcium Ca(2+) signaling pathway, including CaMK1D and calmodulin. This inhibition is relieved by Thr-29 dephosphorylation. Phosphorylation at Ser-175 inhibits kinase activity. Can be phosphorylated on either Thr-362 or Thr-363 but not on both simultaneously. In terms of processing, dephosphorylation of Thr-186 by PPM1A and PPM1B blocks CDK9 activity and may lead to CDK9 proteasomal degradation. However, PPP1CA-mediated Thr-186 dephosphorylation is required to release P-TEFb from its inactive P-TEFb/7SK snRNP complex. Dephosphorylated at Ser-347 by the PNUTS-PP1 complex during RNA polymerase II transcription pause-release. Dephosphorylation of C-terminus Thr and Ser residues by protein phosphatase-1 (PP1) triggers CDK9 activity. Post-translationally, N6-acetylation of Lys-44 promotes kinase activity, whereas acetylation of both Lys-44 and Lys-48 mediated by PCAF/KAT2B and GCN5/KAT2A reduces kinase activity. The acetylated form associates with PML bodies in the nuclear matrix and with the transcriptionally silent HIV-1 genome; deacetylated upon transcription stimulation. Deacetylated by SIRT7, promoting the kinase activity and subsequent 'Ser-2' phosphorylation of the C-terminal domain (CTD) of RNA polymerase II. Polyubiquitinated and thus activated by UBR5. This ubiquitination is promoted by TFIIS/TCEA1 and favors 'Ser-2' phosphorylation of RPB1/POLR2A CTD.

It is found in the nucleus. Its subcellular location is the cytoplasm. It localises to the PML body. The catalysed reaction is L-seryl-[protein] + ATP = O-phospho-L-seryl-[protein] + ADP + H(+). The enzyme catalyses L-threonyl-[protein] + ATP = O-phospho-L-threonyl-[protein] + ADP + H(+). It catalyses the reaction [DNA-directed RNA polymerase] + ATP = phospho-[DNA-directed RNA polymerase] + ADP + H(+). Its activity is regulated as follows. Activation by Thr-186 phosphorylation is calcium Ca(2+) signaling pathway-dependent; actively inactivated by dephosphorylation mediated by PPP1CA, PPM1A and PPM1B. Reversibly repressed by acetylation at Lys-44 and Lys-48. Its function is as follows. Protein kinase involved in the regulation of transcription. Member of the cyclin-dependent kinase pair (CDK9/cyclin-T) complex, also called positive transcription elongation factor b (P-TEFb), which facilitates the transition from abortive to productive elongation by phosphorylating the CTD (C-terminal domain) of the large subunit of RNA polymerase II (RNAP II) POLR2A, SUPT5H and RDBP. This complex is inactive when in the 7SK snRNP complex form. Phosphorylates EP300, MYOD1, RPB1/POLR2A and AR and the negative elongation factors DSIF and NELFE. Regulates cytokine inducible transcription networks by facilitating promoter recognition of target transcription factors (e.g. TNF-inducible RELA/p65 activation and IL-6-inducible STAT3 signaling). Promotes RNA synthesis in genetic programs for cell growth, differentiation and viral pathogenesis. P-TEFb is also involved in cotranscriptional histone modification, mRNA processing and mRNA export. Modulates a complex network of chromatin modifications including histone H2B monoubiquitination (H2Bub1), H3 lysine 4 trimethylation (H3K4me3) and H3K36me3; integrates phosphorylation during transcription with chromatin modifications to control co-transcriptional histone mRNA processing. The CDK9/cyclin-K complex has also a kinase activity towards CTD of RNAP II and can substitute for CDK9/cyclin-T P-TEFb in vitro. Replication stress response protein; the CDK9/cyclin-K complex is required for genome integrity maintenance, by promoting cell cycle recovery from replication arrest and limiting single-stranded DNA amount in response to replication stress, thus reducing the breakdown of stalled replication forks and avoiding DNA damage. In addition, probable function in DNA repair of isoform 2 via interaction with KU70/XRCC6. Promotes cardiac myocyte enlargement. RPB1/POLR2A phosphorylation on 'Ser-2' in CTD activates transcription. AR phosphorylation modulates AR transcription factor promoter selectivity and cell growth. DSIF and NELF phosphorylation promotes transcription by inhibiting their negative effect. The phosphorylation of MYOD1 enhances its transcriptional activity and thus promotes muscle differentiation. Catalyzes phosphorylation of KAT5, promoting KAT5 recruitment to chromatin and histone acetyltransferase activity. This is Cyclin-dependent kinase 9 (CDK9) from Bos taurus (Bovine).